A 285-amino-acid chain; its full sequence is Glutamate racemase (285 aa).

Substrate contacts are provided by residues 28 to 29 (DS) and 60 to 61 (YG). Cysteine 92 (proton donor/acceptor) is an active-site residue. 93 to 94 (NT) contributes to the substrate binding site. Cysteine 204 functions as the Proton donor/acceptor in the catalytic mechanism. Residue 205–206 (TH) coordinates substrate.

It belongs to the aspartate/glutamate racemases family.

The enzyme catalyses L-glutamate = D-glutamate. Its pathway is cell wall biogenesis; peptidoglycan biosynthesis. In terms of biological role, provides the (R)-glutamate required for cell wall biosynthesis. The chain is Glutamate racemase from Escherichia coli O7:K1 (strain IAI39 / ExPEC).